Here is a 795-residue protein sequence, read N- to C-terminus: Forkhead box protein P4 (795 aa).

Over residues 1 to 25 the composition is skewed to polar residues; sequence MMVESASETIRSAPSGQNGVGSLSA. Positions 1–62 are disordered; that stretch reads MMVESASETI…SGGADSNGEM (62 aa). A compositionally biased stretch (low complexity) spans 36–45; the sequence is AGTAPAAGRD. A phosphoserine mark is found at Ser-58 and Ser-92. Residue Lys-181 forms a Glycyl lysine isopeptide (Lys-Gly) (interchain with G-Cter in SUMO2) linkage. Disordered regions lie at residues 233 to 252 and 265 to 310; these read PQLW…SGRQ and TSFA…PLYG. The segment covering 292–303 has biased composition (basic and acidic residues); that stretch reads SRRDSSSHEETP. The C2H2-type zinc finger occupies 312-337; that stretch reads GECKWPGCETLCEDLGQFIKHLNTEH. The leucine-zipper stretch occupies residues 354–375; it reads VQQLEIQLAKESERLQAMMAHL. A disordered region spans residues 379-437; the sequence is PSEPKPFSQPVTVSADPFPDGLVHPPTSAAAPVTPLRPPGLGSASLHSGGPARRRSNDK. A Glycyl lysine isopeptide (Lys-Gly) (interchain with G-Cter in SUMO2) cross-link involves residue Lys-383. Positions 459-549 form a DNA-binding region, fork-head; the sequence is RPPFTYASLI…PPKMTGSPTL (91 aa). Phosphoserine is present on Ser-546. The interval 589–671 is disordered; it reads ASSLLPLSQE…LEEDLGGEDM (83 aa). Residues 609–627 show a composition bias toward polar residues; the sequence is SNGSSSPPRLSPPQYSHQI. Positions 628-642 are enriched in basic and acidic residues; the sequence is QVKEEPAEAEEDRRP.

As to quaternary structure, forms homodimers and heterodimers with FOXP1 and FOXP2. Dimerization is required for DNA-binding. In terms of tissue distribution, expressed in the adult heart, brain, spleen lung, liver, kidney and testes.

Its subcellular location is the nucleus. In terms of biological role, transcriptional repressor that represses lung-specific expression. The chain is Forkhead box protein P4 from Mus musculus (Mouse).